The chain runs to 535 residues: MEAPTVETPPDPSPPSAPAPALVPLRAPDVARLREEQEKVVTNCQERIQHWKKVDNDYNALRERLSTLPDKLSYNIMVPFGPFAFMPGKLVHTNEVTVLLGDNWFAKCSAKQAVGLVEHRKEHVRKTIDDLKKVMKNFESRVEFTEDLQKMSDAAGDIVDIREEIKCDFEFKAKHRIAHKPHSKPKTSDIFEADIANDVKSKDLLADKELWARLEELERQEELLGELDSKPDTVIANGEDTTSSEEEKEDRNTNVNAMHQVTDSHTPCHKDVASSEPFSGQVNSQLNCSVNGSSSYHSDDDDDDDDDDDDDNIDDDDGDNDHEALGVGDNSIPTIYFSHTVEPKRVRINTGKNTTLKFSEKKEEAKRKRKNSTGSGHSAQELPTIRTPADIYRAFVDVVNGEYVPRKSILKSRSRENSVCSDTSESSAAEFDDRRGVLRSISCEEATCSDTSESILEEEPQENQKKLLPLSVTPEAFSGTVIEKEFVSPSLTPPPAIAHPALPTIPERKEVLLEASEETGKRVSKFKAARLQQKD.

The residue at position 1 (Met1) is an N-acetylmethionine. Disordered stretches follow at residues 1 to 23, 223 to 330, 352 to 383, and 412 to 431; these read MEAP…PALV, LLGE…VGDN, KNTT…QELP, and SRSR…AAEF. Over residues 7 to 18 the composition is skewed to pro residues; sequence ETPPDPSPPSAP. Composition is skewed to polar residues over residues 253 to 265 and 276 to 296; these read TNVN…TDSH and EPFS…SSSY. Positions 299–320 are enriched in acidic residues; the sequence is DDDDDDDDDDDDDNIDDDDGDN. A Phosphoserine; by RPS6KB1 modification is found at Ser372. The residue at position 373 (Thr373) is a Phosphothreonine. Polar residues predominate over residues 417–427; the sequence is NSVCSDTSESS. Ser442 bears the Phosphoserine mark.

The protein belongs to the RNA polymerase II subunit 5-mediating protein family. Homodimer. Component of the PAQosome complex which is responsible for the biogenesis of several protein complexes and which consists of R2TP complex members RUVBL1, RUVBL2, RPAP3 and PIH1D1, URI complex members PFDN2, PFDN6, PDRG1, UXT and URI1 as well as ASDURF, POLR2E and DNAAF10/WDR92. Interacts with POLR2E/RPB5, RUVBL2 and RUVBL1. Interacts with PFDN2, PFDN4 and STAP1; the interactions are phosphorylation-dependent and occur in a growth-dependent manner in the mitochondrion. Interacts with UXT. Interacts with PPP1CC; the interaction is phosphorylation-dependent and occurs in a growth factor-dependent manner. Interacts (via the middle C-terminal region) with GTF2F1 and GTF2F2. Interacts with DMAP1. Interacts with TSC1 and TSC2. Interacts with PRPF8 and EFTUD2 in a ZNHIT2-dependent manner. Post-translationally, phosphorylated. Phosphorylation occurs essentially on serine residues. Phosphorylation occurs in response to androgen treatment in prostate cancer cells in a mTOR-dependent manner. Phosphorylated; hyperhosphorylated in mitochondria in a mTORC-dependent signaling pathway. Phosphorylated at Ser-372 by RPS6KB1 in a growth factor- and rapamycin-dependent manner. S6K1-mediated mitochondrial phosphorylation at Ser-372 disrupts the URI1-PPP1CC complex in the mitochondrion, relieves PPP1CC phosphatase inhibition activity and hence engages a negative feedback diminishing RPS6KB1 kinase activity, preventing sustained S6K1-dependent signaling. In terms of tissue distribution, ubiquitous. Expressed in ovarian cancers (at protein level). Expressed strongly in skeletal muscle. Expressed weakly in brain, heart, pancreas and in prostate epithelial cells.

Its subcellular location is the nucleus. The protein resides in the cytoplasm. It localises to the mitochondrion. It is found in the cell projection. The protein localises to the dendrite. Involved in gene transcription regulation. Acts as a transcriptional repressor in concert with the corepressor UXT to regulate androgen receptor (AR) transcription. May act as a tumor suppressor to repress AR-mediated gene transcription and to inhibit anchorage-independent growth in prostate cancer cells. Required for cell survival in ovarian cancer cells. Together with UXT, associates with chromatin to the NKX3-1 promoter region. Antagonizes transcriptional modulation via hepatitis B virus X protein. In terms of biological role, plays a central role in maintaining S6K1 signaling and BAD phosphorylation under normal growth conditions thereby protecting cells from potential deleterious effects of sustained S6K1 signaling. The URI1-PPP1CC complex acts as a central component of a negative feedback mechanism that counteracts excessive S6K1 survival signaling to BAD in response to growth factors. Mediates inhibition of PPP1CC phosphatase activity in mitochondria. Coordinates the regulation of nutrient-sensitive gene expression availability in a mTOR-dependent manner. Seems to be a scaffolding protein able to assemble a prefoldin-like complex that contains PFDs and proteins with roles in transcription and ubiquitination. The sequence is that of Unconventional prefoldin RPB5 interactor 1 (URI1) from Homo sapiens (Human).